The following is a 440-amino-acid chain: Xylose isomerase (440 aa).

Active-site residues include H100 and D103. The Mg(2+) site is built by E231, E267, H270, D295, D306, D308, and D338.

Belongs to the xylose isomerase family. Homotetramer. Mg(2+) serves as cofactor.

The protein localises to the cytoplasm. It carries out the reaction alpha-D-xylose = alpha-D-xylulofuranose. The sequence is that of Xylose isomerase from Burkholderia multivorans (strain ATCC 17616 / 249).